The primary structure comprises 152 residues: Small ribosomal subunit protein uS19 (152 aa).

Belongs to the universal ribosomal protein uS19 family.

Protein S19 forms a complex with S13 that binds strongly to the 16S ribosomal RNA. The protein is Small ribosomal subunit protein uS19 (rps19) of Methanocaldococcus jannaschii (strain ATCC 43067 / DSM 2661 / JAL-1 / JCM 10045 / NBRC 100440) (Methanococcus jannaschii).